The chain runs to 369 residues: Histidinol-phosphate aminotransferase 2 (369 aa).

K231 is subject to N6-(pyridoxal phosphate)lysine.

The protein belongs to the class-II pyridoxal-phosphate-dependent aminotransferase family. Histidinol-phosphate aminotransferase subfamily. As to quaternary structure, homodimer. Requires pyridoxal 5'-phosphate as cofactor.

The catalysed reaction is L-histidinol phosphate + 2-oxoglutarate = 3-(imidazol-4-yl)-2-oxopropyl phosphate + L-glutamate. Its pathway is amino-acid biosynthesis; L-histidine biosynthesis; L-histidine from 5-phospho-alpha-D-ribose 1-diphosphate: step 7/9. In Legionella pneumophila (strain Paris), this protein is Histidinol-phosphate aminotransferase 2.